Consider the following 45-residue polypeptide: MTQRTLGGTNRKQKRTSGFRARMRTHNGRKVIQARRSKGRHRLAV.

A compositionally biased stretch (polar residues) spans 1–10 (MTQRTLGGTN). Positions 1-45 (MTQRTLGGTNRKQKRTSGFRARMRTHNGRKVIQARRSKGRHRLAV) are disordered. Basic residues predominate over residues 11-45 (RKQKRTSGFRARMRTHNGRKVIQARRSKGRHRLAV).

The protein belongs to the bacterial ribosomal protein bL34 family.

This chain is Large ribosomal subunit protein bL34 (rpmH), found in Synechocystis sp. (strain ATCC 27184 / PCC 6803 / Kazusa).